A 222-amino-acid polypeptide reads, in one-letter code: Capsular polysaccharide type 8 biosynthesis protein cap8A (222 aa).

Helical transmembrane passes span 20-40 and 172-192; these read ILIILPLLFLIISAIVTFFVL and VVNLIGAFFLGLVVALIYIFF.

The protein belongs to the CpsC/CapA family.

It localises to the cell membrane. In terms of biological role, required for the biosynthesis of type 8 capsular polysaccharide (Cap8/CP8). Might act as the chain-length regulator. In Staphylococcus aureus, this protein is Capsular polysaccharide type 8 biosynthesis protein cap8A (cap8A).